A 276-amino-acid chain; its full sequence is S-adenosylmethionine-dependent nucleotide dehydratase (276 aa).

A Radical SAM core domain is found at 6-216 (TSVRKFRSAN…RRRHEDIGCI (211 aa)). Positions 22, 26, and 29 each coordinate [4Fe-4S] cluster.

Belongs to the radical SAM superfamily. Viperin family. The cofactor is [4Fe-4S] cluster.

The catalysed reaction is CTP + AH2 + S-adenosyl-L-methionine = 3'-deoxy-3',4'-didehydro-CTP + 5'-deoxyadenosine + L-methionine + A + H2O + H(+). In terms of biological role, expression of pVip50 in E.coli (strain MG1655) confers resistance to phage P1; has no effect against T7. Catalyzes the conversion of cytosine triphosphate (CTP) to 3'-deoxy-3',4'-didehydro-CTP (ddhCTP), probably via a SAM-dependent radical mechanism. The modified nucleotide represses transcription from T7 RNA polymerase-directed genes (possibly by acting as chain terminators), strongly suggesting these nucleotides block viral polymerase transcription. How this protein allows bacteria to resist viruses that do not encode their own RNA polymerase (such as lambda, P1) is unknown. The polypeptide is S-adenosylmethionine-dependent nucleotide dehydratase (Thermoplasmatales archaeon (strain ISO4-H5)).